The chain runs to 430 residues: Pyrokinin-1 receptor (430 aa).

Topologically, residues 1–16 (MSAGNMSHDLGPPRDP) are extracellular. Residue Asn5 is glycosylated (N-linked (GlcNAc...) asparagine). The helical transmembrane segment at 17–37 (LAIVIPVTVVYSLIFITGVVG) threads the bilayer. Over 38–53 (NISTCIVIKKNRSMHT) the chain is Cytoplasmic. Residues 54–74 (ATNYYLFSLAISDFLLLLSGV) form a helical membrane-spanning segment. Residues 75–96 (PQEVSYIWSKYPYVFGEYICIG) are Extracellular-facing. Cys94 and Cys171 are oxidised to a cystine. The helical transmembrane segment at 97-117 (RGLLAETSANATVLTITAFTV) threads the bilayer. Over 118–140 (ERYIAICHPFLGQAMSKLSRAIR) the chain is Cytoplasmic. The helical transmembrane segment at 141–161 (IIVLVWIMAIVTAIPQAAQFG) threads the bilayer. Topologically, residues 162 to 185 (IEHYSGVEQCGIVRVIVKHSFQLS) are extracellular. Residues 186–206 (TFIFFLAPMSIILVLYLLIGV) form a helical membrane-spanning segment. Over 207 to 281 (HLYRSTLVEG…GRLNHYGTRR (75 aa)) the chain is Cytoplasmic. Residues 282–302 (VLRMLVAVVVCFFLCWAPFHA) traverse the membrane as a helical segment. Residues 303–321 (QRLIAIYAPARGAKLRDQH) are Extracellular-facing. A helical membrane pass occupies residues 322–342 (EFVYTVMTYVSGVLYYLSTCI). At 343–430 (NPLLYNIMSH…QYAMIGVQVN (88 aa)) the chain is on the cytoplasmic side. The span at 388–397 (TNSSQTQRFS) shows a compositional bias: polar residues. Positions 388-413 (TNSSQTQRFSIESAEQPKPSIMQNPT) are disordered.

Belongs to the G-protein coupled receptor 1 family.

Its subcellular location is the cell membrane. Its function is as follows. Receptor for the neuropeptide CAP-3/pyrokinin-1 (TGPSASSGLWFGPRL-amide). Also activated weakly by other neuropeptides terminating in the sequence PRL-amide including pyrokinin-2, Hug-gamma, and ecdysis-triggering-hormone-1. The activity of this receptor is mediated by G proteins which activate a phosphatidyl-inositol-calcium second messenger system. In Drosophila melanogaster (Fruit fly), this protein is Pyrokinin-1 receptor.